We begin with the raw amino-acid sequence, 709 residues long: Heme/hemopexin utilization protein C (709 aa).

An N-terminal signal peptide occupies residues 1-21; that stretch reads MRFSKLSLAITTTLVTANALA. Residues 36-147 form the TBDR plug domain; sequence DPSRFTYTPQ…LGGVVAMRTP (112 aa). The region spanning 158 to 709 is the TBDR beta-barrel domain; it reads KFGVKIRQGY…NAKISAVYSF (552 aa). The TonB C-terminal box motif lies at 692–709; that stretch reads SLMEGTGRNAKISAVYSF.

It belongs to the TonB-dependent receptor family.

The protein resides in the cell outer membrane. Required for utilization of free heme at low concentrations. The polypeptide is Heme/hemopexin utilization protein C (hxuC) (Haemophilus influenzae (strain 86-028NP)).